The following is a 183-amino-acid chain: Large ribosomal subunit protein uL6 (183 aa).

This sequence belongs to the universal ribosomal protein uL6 family. In terms of assembly, part of the 50S ribosomal subunit.

This protein binds to the 23S rRNA, and is important in its secondary structure. It is located near the subunit interface in the base of the L7/L12 stalk, and near the tRNA binding site of the peptidyltransferase center. The protein is Large ribosomal subunit protein uL6 of Methanococcus aeolicus (strain ATCC BAA-1280 / DSM 17508 / OCM 812 / Nankai-3).